A 211-amino-acid polypeptide reads, in one-letter code: ATP-dependent Clp protease proteolytic subunit (211 aa).

The Nucleophile role is filled by Ser-107. His-132 is a catalytic residue.

It belongs to the peptidase S14 family. In terms of assembly, fourteen ClpP subunits assemble into 2 heptameric rings which stack back to back to give a disk-like structure with a central cavity, resembling the structure of eukaryotic proteasomes.

The protein resides in the cytoplasm. It carries out the reaction Hydrolysis of proteins to small peptides in the presence of ATP and magnesium. alpha-casein is the usual test substrate. In the absence of ATP, only oligopeptides shorter than five residues are hydrolyzed (such as succinyl-Leu-Tyr-|-NHMec, and Leu-Tyr-Leu-|-Tyr-Trp, in which cleavage of the -Tyr-|-Leu- and -Tyr-|-Trp bonds also occurs).. Its function is as follows. Cleaves peptides in various proteins in a process that requires ATP hydrolysis. Has a chymotrypsin-like activity. Plays a major role in the degradation of misfolded proteins. This chain is ATP-dependent Clp protease proteolytic subunit, found in Xanthobacter autotrophicus (strain ATCC BAA-1158 / Py2).